A 434-amino-acid chain; its full sequence is Adenylosuccinate synthetase (434 aa).

GTP-binding positions include 13–19 and 41–43; these read GDEGKGK and GHT. Asp14 functions as the Proton acceptor in the catalytic mechanism. 2 residues coordinate Mg(2+): Asp14 and Gly41. IMP contacts are provided by residues 14-17, 39-42, Thr133, Arg147, Gln228, Thr243, and Arg307; these read DEGK and NAGH. His42 serves as the catalytic Proton donor. 303 to 309 is a substrate binding site; that stretch reads STTGRKR. Residues Arg309, 335 to 337, and 417 to 419 contribute to the GTP site; these read KID and STG.

The protein belongs to the adenylosuccinate synthetase family. In terms of assembly, homodimer. Mg(2+) is required as a cofactor.

The protein localises to the cytoplasm. It carries out the reaction IMP + L-aspartate + GTP = N(6)-(1,2-dicarboxyethyl)-AMP + GDP + phosphate + 2 H(+). It functions in the pathway purine metabolism; AMP biosynthesis via de novo pathway; AMP from IMP: step 1/2. In terms of biological role, plays an important role in the de novo pathway of purine nucleotide biosynthesis. Catalyzes the first committed step in the biosynthesis of AMP from IMP. The sequence is that of Adenylosuccinate synthetase from Wigglesworthia glossinidia brevipalpis.